A 394-amino-acid chain; its full sequence is Bifunctional enzyme IspD/IspF (394 aa).

A 2-C-methyl-D-erythritol 4-phosphate cytidylyltransferase region spans residues 1-230 (MADTLAIVVA…AEALLGGGPV (230 aa)). A 2-C-methyl-D-erythritol 2,4-cyclodiphosphate synthase region spans residues 231 to 394 (LVGFGYDVHR…RIVLPGDRVL (164 aa)). D237 and H239 together coordinate a divalent metal cation. 4-CDP-2-C-methyl-D-erythritol 2-phosphate is bound by residues 237 to 239 (DVH) and 263 to 264 (HS). H271 provides a ligand contact to a divalent metal cation. Residues 285 to 287 (DIG), 290 to 294 (FPDDD), 361 to 364 (TTTE), and F368 contribute to the 4-CDP-2-C-methyl-D-erythritol 2-phosphate site.

This sequence in the N-terminal section; belongs to the IspD/TarI cytidylyltransferase family. IspD subfamily. The protein in the C-terminal section; belongs to the IspF family. The cofactor is a divalent metal cation.

It catalyses the reaction 2-C-methyl-D-erythritol 4-phosphate + CTP + H(+) = 4-CDP-2-C-methyl-D-erythritol + diphosphate. The enzyme catalyses 4-CDP-2-C-methyl-D-erythritol 2-phosphate = 2-C-methyl-D-erythritol 2,4-cyclic diphosphate + CMP. It participates in isoprenoid biosynthesis; isopentenyl diphosphate biosynthesis via DXP pathway; isopentenyl diphosphate from 1-deoxy-D-xylulose 5-phosphate: step 2/6. The protein operates within isoprenoid biosynthesis; isopentenyl diphosphate biosynthesis via DXP pathway; isopentenyl diphosphate from 1-deoxy-D-xylulose 5-phosphate: step 4/6. In terms of biological role, bifunctional enzyme that catalyzes the formation of 4-diphosphocytidyl-2-C-methyl-D-erythritol from CTP and 2-C-methyl-D-erythritol 4-phosphate (MEP) (IspD), and catalyzes the conversion of 4-diphosphocytidyl-2-C-methyl-D-erythritol 2-phosphate (CDP-ME2P) to 2-C-methyl-D-erythritol 2,4-cyclodiphosphate (ME-CPP) with a corresponding release of cytidine 5-monophosphate (CMP) (IspF). This Desulforudis audaxviator (strain MP104C) protein is Bifunctional enzyme IspD/IspF.